We begin with the raw amino-acid sequence, 312 residues long: Atrochrysone carboxyl ACP thioesterase AacuM (312 aa).

4 residues coordinate Zn(2+): His103, His105, Asp107, and His108. Asp107 functions as the Proton donor/acceptor in the catalytic mechanism.

This sequence belongs to the metallo-beta-lactamase superfamily. Requires Zn(2+) as cofactor.

The enzyme catalyses atrochrysone carboxyl-[ACP] + H2O = atrochrysone carboxylate + holo-[ACP] + H(+). It functions in the pathway secondary metabolite biosynthesis. In terms of biological role, atrochrysone carboxyl ACP thioesterase; part of the gene cluster that mediates the biosynthesis of the tetrahydroxanthone dimer secalonic acid D. The pathway begins with the synthesis of atrochrysone thioester by the polyketide synthase AacuL. The atrochrysone carboxyl ACP thioesterase AacuM then breaks the thioester bond and releases the atrochrysone carboxylic acid from AacuL. Atrochrysone carboxylic acid is decarboxylated by the decarboxylase AacuI, and oxidized by the anthrone oxygenase AacuG to yield emodin. Emodin is then reduced to emodin hydroquinone by a yet unidentified oxidoreductase. A-ring reduction by the short chain dehydrogenase AacuN, dehydration by the scytalone dehydratase-like protein AacuK and probable spontaneous re-oxidation, results in overall deoxygenation to chrysophanol. Baeyer-Villiger oxidation by the Baeyer-Villiger monooxygenase (BVMO) AacuH then yields monodictyphenone. Monodictyphenone is transformed into compounds with the tetrahydroxanthone skeleton via methylesterification by the methyltransferase AacuQ, followed by the action of the flavin-dependent monooxygenase AacuC, the isomerase AacuP, and the short chain dehydrogenase/reductase AacuF or AacuD. AacuF and AacuD should accept the same compound as a substrate but perform the ketoreduction with a different stereoselectivity, thus yielding blennolides B and A, respectively. In the final step of the biosynthesis, the cytochrome P450 monooxygenase AacuE accepts blennolide B and/or blennolide A to conduct the dimerization reaction to furnish the tetrahydroxanthone dimers, secalonic acids D, B, and F. The polypeptide is Atrochrysone carboxyl ACP thioesterase AacuM (Aspergillus aculeatus (strain ATCC 16872 / CBS 172.66 / WB 5094)).